The primary structure comprises 499 residues: Potassium voltage-gated channel subfamily A member 2 (499 aa).

The segment at 1-27 is disordered; that stretch reads MTVATGEPADEAAALPGHPQDTYDPEA. The interval 1 to 125 is tetramerization domain; the sequence is MTVATGEPAD…YELGEEAMEM (125 aa). Residues 1–160 are Cytoplasmic-facing; it reads MTVATGEPAD…LLFEYPESSG (160 aa). A helical transmembrane segment spans residues 161–182; that stretch reads PARIIAIVSVMVILISIVSFCL. At 183–221 the chain is on the extracellular side; that stretch reads ETLPIFRDENEDMHGGGVTFHTYSNSTIGYQQSTSFTDP. Residue Asn-207 is glycosylated (N-linked (GlcNAc...) asparagine). A helical transmembrane segment spans residues 222-243; sequence FFIVETLCIIWFSFEFLVRFFA. The S-palmitoyl cysteine moiety is linked to residue Cys-244. Topologically, residues 244 to 254 are cytoplasmic; sequence CPSKAGFFTNI. Residues 255-275 form a helical membrane-spanning segment; that stretch reads MNIIDIVAIIPYFITLGTELA. The Extracellular portion of the chain corresponds to 276–289; it reads EKPEDAQQGQQAMS. Residues 290-310 traverse the membrane as a helical; Voltage-sensor segment; the sequence is LAILRVIRLVRVFRIFKLSRH. Topologically, residues 311–325 are cytoplasmic; sequence SKGLQILGQTLKASM. Positions 312-325 are S4-S5 linker; that stretch reads KGLQILGQTLKASM. A helical membrane pass occupies residues 326 to 347; the sequence is RELGLLIFFLFIGVILFSSAVY. At 348–361 the chain is on the extracellular side; sequence FAEADERESQFPSI. An intramembrane region (helical) is located at residues 362-373; that stretch reads PDAFWWAVVSMT. The short motif at 374–379 is the Selectivity filter element; the sequence is TVGYGD. An intramembrane segment occupies 374–381; it reads TVGYGDMV. Residues 382–388 are Extracellular-facing; the sequence is PTTIGGK. A helical transmembrane segment spans residues 389 to 417; it reads IVGSLCAIAGVLTIALPVPVIVSNFNYFY. Topologically, residues 418-499 are cytoplasmic; it reads HRETEGEEQA…VNITKMLTDV (82 aa). Tyr-429 carries the post-translational modification Phosphotyrosine. 4 positions are modified to phosphoserine: Ser-434, Ser-440, Ser-441, and Ser-449. At Tyr-458 the chain carries Phosphotyrosine. A Phosphoserine modification is found at Ser-468. Residues 497–499 carry the PDZ-binding motif; it reads TDV.

This sequence belongs to the potassium channel family. A (Shaker) (TC 1.A.1.2) subfamily. Kv1.2/KCNA2 sub-subfamily. Homotetramer and heterotetramer with other channel-forming alpha subunits, such as KCNA1, KCNA4, KCNA5, KCNA6 and KCNA7. Channel activity is regulated by interaction with the beta subunits, including KCNAB1 and KCNAB2. Identified in a complex with KCNA1 and KCNAB2. Identified in a complex with KCNA5 and KCNAB1. Interacts with the beta subunit KCNAB1. Identified in a complex with KCNA4 and FYN. Interacts with PTK2B. Interacts (via C-terminus) with CTTN. Interacts (via N-terminal cytoplasmic domain) with RHOA (GTP-bound form); this regulates channel activity by reducing location at the cell surface in response to CHRM1 activation. Interacts with DRD2. Interacts with SIGMAR1; cocaine consumption leads to increased interaction. Interacts with ADAM22. Interacts with CNTNAP2. Interacts (via C-terminus) with the PDZ domains of DLG1, DLG2 and DLG4. Interacts with ADAM11. Interacts with LYNX1. In terms of processing, phosphorylated on tyrosine residues; phosphorylation increases in response to ischemia. Phosphorylated on tyrosine residues by activated PTK2B/PYK2. Phosphorylation on tyrosine residues suppresses ion channel activity. Phosphorylated on tyrosine residues in response to CHRM1 activation; this abolishes interaction with CTTN. This is probably due to endocytosis of the phosphorylated channel subunits. Phosphorylated on serine residues in response to increased cAMP levels; phosphorylation is apparently not catalyzed by PKA. N-glycosylated, with complex, sialylated N-glycans. As to expression, expressed in a wide variety of gastrointestinal smooth muscles. Not expressed in portal vein, renal artery, and uterus.

The protein localises to the cell membrane. It localises to the membrane. It is found in the cell projection. The protein resides in the axon. Its subcellular location is the synapse. The protein localises to the presynaptic cell membrane. It localises to the synaptosome. It is found in the endoplasmic reticulum membrane. The protein resides in the dendrite. Its subcellular location is the lamellipodium membrane. The protein localises to the cell junction. It localises to the paranodal septate junction. The enzyme catalyses K(+)(in) = K(+)(out). With respect to regulation, inhibited by 4-aminopyridine (4-AP). Inhibited by dendrotoxin (DTX) and charybdotoxin (CTX), but not by tetraethylammonium (TEA). Inhibited by tityustoxin-K alpha (TsTX-Kalpha), a toxin that is highly specific for KCNA2. Inhibited by maurotoxin. Inhibited by kappaM conotoxins kappaM-RIIIJ and kappaM-RIIIK. Voltage-gated potassium channel that mediates transmembrane potassium transport in excitable membranes, primarily in the brain and the central nervous system, but also in the cardiovascular system. Prevents aberrant action potential firing and regulates neuronal output. Forms tetrameric potassium-selective channels through which potassium ions pass in accordance with their electrochemical gradient. The channel alternates between opened and closed conformations in response to the voltage difference across the membrane. Can form functional homotetrameric channels and heterotetrameric channels that contain variable proportions of KCNA1, KCNA2, KCNA4, KCNA5, KCNA6, KCNA7, and possibly other family members as well; channel properties depend on the type of alpha subunits that are part of the channel. Channel properties are modulated by cytoplasmic beta subunits that regulate the subcellular location of the alpha subunits and promote rapid inactivation of delayed rectifier potassium channels. In vivo, membranes probably contain a mixture of heteromeric potassium channel complexes, making it difficult to assign currents observed in intact tissues to any particular potassium channel family member. Homotetrameric KCNA2 forms a delayed-rectifier potassium channel that opens in response to membrane depolarization, followed by slow spontaneous channel closure. In contrast, a heteromultimer formed by KCNA2 and KCNA4 shows rapid inactivation. Regulates neuronal excitability and plays a role as pacemaker in the regulation of neuronal action potentials. KCNA2-containing channels play a presynaptic role and prevent hyperexcitability and aberrant action potential firing. Response to toxins that are selective for KCNA2-containing potassium channels suggests that in Purkinje cells, dendritic subthreshold KCNA2-containing potassium channels prevent random spontaneous calcium spikes, suppressing dendritic hyperexcitability without hindering the generation of somatic action potentials, and thereby play an important role in motor coordination. Plays a role in the induction of long-term potentiation of neuron excitability in the CA3 layer of the hippocampus. May function as down-stream effector for G protein-coupled receptors and inhibit GABAergic inputs to basolateral amygdala neurons. May contribute to the regulation of neurotransmitter release, such as gamma-aminobutyric acid (GABA). Contributes to the regulation of the axonal release of the neurotransmitter dopamine. Reduced KCNA2 expression plays a role in the perception of neuropathic pain after peripheral nerve injury, but not acute pain. Plays a role in the regulation of the time spent in non-rapid eye movement (NREM) sleep. The protein is Potassium voltage-gated channel subfamily A member 2 (KCNA2) of Canis lupus familiaris (Dog).